The chain runs to 1313 residues: Ataxin-2 (1313 aa).

Low complexity predominate over residues 1-12 (MRSAAAAPRSPA). The segment at 1 to 255 (MRSAAAAPRS…RNSNKGLPQS (255 aa)) is disordered. Over residues 48 to 65 (GPYPSAAPPPPGPGPPPS) the composition is skewed to pro residues. Low complexity-rich tracts occupy residues 104–114 (FVVLLLPLASP), 141–154 (ARPA…ACEP), 166–187 (QQQQ…QQQQ), and 204–234 (LLAS…VAAT). The segment covering 235-244 (SGGGRPGLGR) has biased composition (gly residues). The residue at position 248 (serine 248) is a Phosphoserine. A Sm domain is found at 267–344 (RMVHILTSVV…FVVVQFKDMD (78 aa)). 5 positions are modified to phosphoserine: serine 393, serine 466, serine 478, serine 508, and serine 554. Composition is skewed to basic and acidic residues over residues 459-471 (ALEN…EEKY) and 478-492 (SSER…RENK). Disordered regions lie at residues 459–954 (ALEN…HQQP) and 1137–1219 (NATL…NSFP). Residues 508 to 544 (SGRQNSPRMGQPGSGSMPSRSTSHTSDFNPNSGSDQR) show a composition bias toward polar residues. Positions 552–562 (WPSPCPSPSSR) are enriched in pro residues. Positions 563–581 (PPSRYQSGPNSLPPRAATP) are enriched in low complexity. The span at 582 to 598 (TRPPSRPPSRPSRPPSH) shows a compositional bias: pro residues. The residue at position 624 (serine 624) is a Phosphoserine. The segment covering 627–637 (AQRHPRNHRVS) has biased composition (basic residues). Residue arginine 640 is modified to Asymmetric dimethylarginine; alternate. The residue at position 640 (arginine 640) is an Omega-N-methylarginine; alternate. Serine 642 bears the Phosphoserine mark. Residues 666-681 (TSPSGGTWSSVVSGVP) are compositionally biased toward low complexity. A Phosphoserine modification is found at serine 684. Over residues 693–703 (PRQNSIGNTPS) the composition is skewed to polar residues. Residue serine 728 is modified to Phosphoserine. At threonine 741 the chain carries Phosphothreonine. Polar residues predominate over residues 768–777 (PNETSPSFSK). Residues serine 772 and serine 784 each carry the phosphoserine modification. The segment covering 788-804 (SEHRKQIDDLKKFKNDF) has biased composition (basic and acidic residues). The span at 807-820 (QPSSTSESMDQLLN) shows a compositional bias: polar residues. Positions 821-844 (KNREGEKSRDLIKDKIEPSAKDSF) are enriched in basic and acidic residues. Residues 847 to 871 (NSSSNCTSGSSKPNSPSISPSILSN) are compositionally biased toward low complexity. Phosphoserine occurs at positions 856, 857, 861, 865, 867, 888, and 889. Over residues 880 to 891 (VTSQGVQTSSPA) the composition is skewed to polar residues. A Glycyl lysine isopeptide (Lys-Gly) (interchain with G-Cter in SUMO2) cross-link involves residue lysine 893. Positions 893–910 (KQEKDDKEEKKDAAEQVR) are enriched in basic and acidic residues. Low complexity-rich tracts occupy residues 925-936 (SFSQPKPSTTPT) and 1155-1192 (GQQQ…QQSA). Positions 1206-1219 (TPASNTQSPQNSFP) are enriched in polar residues.

Belongs to the ataxin-2 family. Monomer. Can also form homodimers. Interacts with TARDBP; the interaction is RNA-dependent. Interacts with RBFOX1. Interacts with polyribosomes. Interacts with SH3GL2 and SH3GL3. Interacts with SH3KBP1 and CBL. Interacts with EGFR. Interacts with ATXN2L. As to expression, expressed in the brain, heart, liver, skeletal muscle, pancreas and placenta. Isoform 1 is predominant in the brain and spinal cord. Isoform 4 is more abundant in the cerebellum. In the brain, broadly expressed in the amygdala, caudate nucleus, corpus callosum, hippocampus, hypothalamus, substantia nigra, subthalamic nucleus and thalamus.

It localises to the cytoplasm. Involved in EGFR trafficking, acting as negative regulator of endocytic EGFR internalization at the plasma membrane. The protein is Ataxin-2 (ATXN2) of Homo sapiens (Human).